The chain runs to 387 residues: 3-ketoacyl-CoA thiolase (387 aa).

Cys91 functions as the Acyl-thioester intermediate in the catalytic mechanism. Active-site proton acceptor residues include His343 and Cys373.

This sequence belongs to the thiolase-like superfamily. Thiolase family. In terms of assembly, heterotetramer of two alpha chains (FadB) and two beta chains (FadA).

The protein localises to the cytoplasm. It catalyses the reaction an acyl-CoA + acetyl-CoA = a 3-oxoacyl-CoA + CoA. It participates in lipid metabolism; fatty acid beta-oxidation. In terms of biological role, catalyzes the final step of fatty acid oxidation in which acetyl-CoA is released and the CoA ester of a fatty acid two carbons shorter is formed. This Salmonella choleraesuis (strain SC-B67) protein is 3-ketoacyl-CoA thiolase.